Consider the following 439-residue polypeptide: Xylose isomerase (439 aa).

Active-site residues include H103 and D106. E234, E270, H273, D298, D309, D311, and D341 together coordinate Mg(2+).

The protein belongs to the xylose isomerase family. As to quaternary structure, homotetramer. The cofactor is Mg(2+).

It is found in the cytoplasm. It catalyses the reaction alpha-D-xylose = alpha-D-xylulofuranose. This chain is Xylose isomerase, found in Bacteroides fragilis (strain YCH46).